Here is a 564-residue protein sequence, read N- to C-terminus: Dihydroxy-acid dehydratase (564 aa).

Position 55 (C55) interacts with [2Fe-2S] cluster. A Mg(2+)-binding site is contributed by D87. Position 128 (C128) interacts with [2Fe-2S] cluster. The Mg(2+) site is built by D129 and K130. At K130 the chain carries N6-carboxylysine. C200 provides a ligand contact to [2Fe-2S] cluster. A Mg(2+)-binding site is contributed by E452. S478 functions as the Proton acceptor in the catalytic mechanism.

Belongs to the IlvD/Edd family. Homodimer. [2Fe-2S] cluster serves as cofactor. The cofactor is Mg(2+).

The catalysed reaction is (2R)-2,3-dihydroxy-3-methylbutanoate = 3-methyl-2-oxobutanoate + H2O. It catalyses the reaction (2R,3R)-2,3-dihydroxy-3-methylpentanoate = (S)-3-methyl-2-oxopentanoate + H2O. Its pathway is amino-acid biosynthesis; L-isoleucine biosynthesis; L-isoleucine from 2-oxobutanoate: step 3/4. The protein operates within amino-acid biosynthesis; L-valine biosynthesis; L-valine from pyruvate: step 3/4. Functionally, functions in the biosynthesis of branched-chain amino acids. Catalyzes the dehydration of (2R,3R)-2,3-dihydroxy-3-methylpentanoate (2,3-dihydroxy-3-methylvalerate) into 2-oxo-3-methylpentanoate (2-oxo-3-methylvalerate) and of (2R)-2,3-dihydroxy-3-methylbutanoate (2,3-dihydroxyisovalerate) into 2-oxo-3-methylbutanoate (2-oxoisovalerate), the penultimate precursor to L-isoleucine and L-valine, respectively. The protein is Dihydroxy-acid dehydratase of Albidiferax ferrireducens (strain ATCC BAA-621 / DSM 15236 / T118) (Rhodoferax ferrireducens).